The following is a 158-amino-acid chain: Oocyte-secreted protein 2 (158 aa).

Residues 1-17 form the signal peptide; sequence MALEVLMLLAVLIWTGA.

It belongs to the PLAC1 family. As to expression, highly expressed in oocytes.

It is found in the secreted. The protein resides in the cytoplasm. Functionally, involved in oocyte maturation. The sequence is that of Oocyte-secreted protein 2 (OOSP2) from Homo sapiens (Human).